Consider the following 676-residue polypeptide: Electrogenic aspartate/glutamate antiporter SLC25A12, mitochondrial (676 aa).

Ala2 bears the N-acetylalanine mark. The interval 2–293 (AVKVHTTKRG…TLADIERIAP (292 aa)) is regulatory N-terminal domain. Residues 2–328 (AVKVHTTKRG…WLQIAESAYR (327 aa)) are Mitochondrial intermembrane-facing. Ca(2+) contacts are provided by Asp65, Thr67, Asp69, Leu71, and Glu76. 4 EF-hand domains span residues 65 to 76 (DQTKDGLISYQE), 86 to 121 (APDS…TIIH), 125 to 155 (PFNW…QFLQ), and 157 to 192 (LQLE…IRSH). Residues 294–309 (LAEGALPYNLAELQRQ) form a linker loop domain region. The interval 319 to 611 (WLQIAESAYR…RWFYIDFGGL (293 aa)) is carrier domain. Solcar repeat units follow at residues 323–415 (AESA…VRDK), 423–507 (IPLP…CKLL), and 515–603 (VGGI…LQRW). The chain crosses the membrane as a helical span at residues 329-346 (FTLGSVAGAVGATAVYPI). Topologically, residues 347–389 (DLVKTRMQNQRGTGSVVGELMYKNSFDCFKKVLRYEGFFGLYR) are mitochondrial matrix. A helical transmembrane segment spans residues 390–409 (GLIPQLIGVAPEKAIKLTVN). Residues 410–432 (DFVRDKFTRRDGSIPLPAEILAG) lie on the Mitochondrial intermembrane side of the membrane. Residues 433–446 (GCAGGSQVIFTNPL) form a helical membrane-spanning segment. Residues 447 to 481 (EIVKIRLQVAGEITTGPRVSALNVLQDLGLFGLYK) lie on the Mitochondrial matrix side of the membrane. Residues 482 to 501 (GAKACFLRDIPFSAIYFPVY) traverse the membrane as a helical segment. Residues 502-520 (AHCKLLLADENGHVGGINL) lie on the Mitochondrial intermembrane side of the membrane. The chain crosses the membrane as a helical span at residues 521–538 (LTAGAMAGVPAASLVTPA). Residues 539–577 (DVIKTRLQVAARAGQTTYSGVIDCFRKILREEGPSAFWK) are Mitochondrial matrix-facing. A helical membrane pass occupies residues 578–597 (GTAARVFRSSPQFGVTLVTY). Topologically, residues 598 to 676 (ELLQRWFYID…AQPKVAAAAQ (79 aa)) are mitochondrial intermembrane. The C-terminal domain stretch occupies residues 612-674 (KPSGSEPTPK…AAAQPKVAAA (63 aa)).

It belongs to the mitochondrial carrier (TC 2.A.29) family. In terms of assembly, homodimer (via N-terminus).

Its subcellular location is the mitochondrion inner membrane. The catalysed reaction is L-aspartate(in) + L-glutamate(out) + H(+)(out) = L-aspartate(out) + L-glutamate(in) + H(+)(in). It catalyses the reaction 3-sulfino-L-alanine(out) + L-glutamate(in) + H(+)(in) = 3-sulfino-L-alanine(in) + L-glutamate(out) + H(+)(out). It carries out the reaction 3-sulfino-L-alanine(out) + L-aspartate(in) = 3-sulfino-L-alanine(in) + L-aspartate(out). Its activity is regulated as follows. L-aspartate and 3-sulfino-L-alanine uptake are both inhibited by glisoxepide. Functionally, mitochondrial electrogenic aspartate/glutamate antiporter that favors efflux of aspartate and entry of glutamate and proton within the mitochondria as part of the malate-aspartate shuttle. Also mediates the uptake of L-cysteinesulfinate (3-sulfino-L-alanine) by mitochondria in exchange of L-glutamate and proton. Can also exchange L-cysteinesulfinate with aspartate in their anionic form without any proton translocation. Lacks transport activity towards L-glutamine or gamma-aminobutyric acid (GABA). The protein is Electrogenic aspartate/glutamate antiporter SLC25A12, mitochondrial of Rattus norvegicus (Rat).